Reading from the N-terminus, the 492-residue chain is Probable cobyric acid synthase (492 aa).

The GATase cobBQ-type domain maps to 252-444 (PIEVNIVKFS…FHGILENFEF (193 aa)). Residue C330 is the Nucleophile of the active site. H436 is a catalytic residue.

The protein belongs to the CobB/CobQ family. CobQ subfamily.

It participates in cofactor biosynthesis; adenosylcobalamin biosynthesis. Its function is as follows. Catalyzes amidations at positions B, D, E, and G on adenosylcobyrinic A,C-diamide. NH(2) groups are provided by glutamine, and one molecule of ATP is hydrogenolyzed for each amidation. In Methanococcus maripaludis (strain C7 / ATCC BAA-1331), this protein is Probable cobyric acid synthase.